We begin with the raw amino-acid sequence, 222 residues long: Beta-amylase (222 aa).

Substrate is bound at residue threonine 36. Residue glutamate 74 is the Proton acceptor of the active site. Residues 75–76 and arginine 114 contribute to the substrate site; that span reads NA.

This sequence belongs to the glycosyl hydrolase 14 family.

The catalysed reaction is Hydrolysis of (1-&gt;4)-alpha-D-glucosidic linkages in polysaccharides so as to remove successive maltose units from the non-reducing ends of the chains.. This is Beta-amylase (BMY1) from Secale cereale (Rye).